Consider the following 156-residue polypeptide: Cyclin-dependent protein kinase inhibitor SMR10 (156 aa).

Positions 52-90 (QDQDLEPKSQETNNCSRKEGATVKKEEEEEDDYCKTPTR) are disordered. A compositionally biased stretch (basic and acidic residues) spans 67-77 (SRKEGATVKKE).

Its function is as follows. Probable cyclin-dependent protein kinase (CDK) inhibitor that functions as a repressor of mitosis in the endoreduplication cell cycle. This Arabidopsis thaliana (Mouse-ear cress) protein is Cyclin-dependent protein kinase inhibitor SMR10.